A 196-amino-acid polypeptide reads, in one-letter code: Transcriptional regulatory protein UhpA (196 aa).

Positions 3–116 (TVALIDDHLI…ELIAAVHTVA (114 aa)) constitute a Response regulatory domain. 4-aspartylphosphate is present on Asp-54. The 66-residue stretch at 131–196 (ASGRQDPLTK…ELARRMFDGW (66 aa)) folds into the HTH luxR-type domain. Residues 155–174 (VKEIAAELGLSPKTVHVHRA) constitute a DNA-binding region (H-T-H motif).

In terms of processing, phosphorylated and dephosphorylated by UhpB.

Its subcellular location is the cytoplasm. Phosphorylation by UhpB enhances DNA binding activity. In terms of biological role, part of the UhpABC signaling cascade that controls the expression of the hexose phosphate transporter UhpT. Activates the transcription of the uhpT gene. Acts by binding specifically to the uhpT promoter region. The chain is Transcriptional regulatory protein UhpA (uhpA) from Escherichia coli (strain K12).